The primary structure comprises 205 residues: Probable ADP-ribosylation factor At2g15310 (205 aa).

A lipid anchor (N-myristoyl glycine) is attached at Gly-2. GTP contacts are provided by residues 24-31 (GLDGSGKT), 67-71 (DIGGQ), and 126-129 (NKQD).

It belongs to the small GTPase superfamily. Arf family.

It localises to the golgi apparatus. GTP-binding protein involved in protein trafficking; may modulate vesicle budding and uncoating within the Golgi apparatus. The protein is Probable ADP-ribosylation factor At2g15310 of Arabidopsis thaliana (Mouse-ear cress).